Here is a 609-residue protein sequence, read N- to C-terminus: Meiotically up-regulated gene 28 protein (609 aa).

RRM domains lie at 20–103 (ISIY…YTHI) and 419–499 (CNLF…YAEK).

Its subcellular location is the cytoplasm. Has a role in sporulation. The protein is Meiotically up-regulated gene 28 protein (mug28) of Schizosaccharomyces pombe (strain 972 / ATCC 24843) (Fission yeast).